Consider the following 151-residue polypeptide: Lipoprotein signal peptidase (151 aa).

Transmembrane regions (helical) follow at residues 61 to 81 (GSQW…IWIG) and 88 to 107 (SRWQ…GNGI). Active-site residues include D117 and D133. Residues 128–148 (VFNLADVAINLAVLCLLIEAI) form a helical membrane-spanning segment.

Belongs to the peptidase A8 family.

It is found in the cell inner membrane. It carries out the reaction Release of signal peptides from bacterial membrane prolipoproteins. Hydrolyzes -Xaa-Yaa-Zaa-|-(S,diacylglyceryl)Cys-, in which Xaa is hydrophobic (preferably Leu), and Yaa (Ala or Ser) and Zaa (Gly or Ala) have small, neutral side chains.. Its pathway is protein modification; lipoprotein biosynthesis (signal peptide cleavage). Functionally, this protein specifically catalyzes the removal of signal peptides from prolipoproteins. The chain is Lipoprotein signal peptidase from Synechococcus sp. (strain RCC307).